The chain runs to 56 residues: uncharacterized protein (56 aa).

This is an uncharacterized protein from Dictyostelium discoideum (Social amoeba).